The primary structure comprises 384 residues: tRNA-specific 2-thiouridylase MnmA (384 aa).

ATP is bound by residues 13 to 20 (GLSGGVDS) and Met39. The tract at residues 99–101 (NPD) is interaction with target base in tRNA. The active-site Nucleophile is Cys104. Cys104 and Cys215 form a disulfide bridge. Residue Gly128 participates in ATP binding. The interval 165–167 (KDQ) is interaction with tRNA. The active-site Cysteine persulfide intermediate is Cys215. The tract at residues 333–334 (RY) is interaction with tRNA.

It belongs to the MnmA/TRMU family.

It is found in the cytoplasm. The enzyme catalyses S-sulfanyl-L-cysteinyl-[protein] + uridine(34) in tRNA + AH2 + ATP = 2-thiouridine(34) in tRNA + L-cysteinyl-[protein] + A + AMP + diphosphate + H(+). Its function is as follows. Catalyzes the 2-thiolation of uridine at the wobble position (U34) of tRNA, leading to the formation of s(2)U34. In Albidiferax ferrireducens (strain ATCC BAA-621 / DSM 15236 / T118) (Rhodoferax ferrireducens), this protein is tRNA-specific 2-thiouridylase MnmA.